A 906-amino-acid polypeptide reads, in one-letter code: Catenin alpha-1 (906 aa).

Thr-2 bears the N-acetylthreonine mark. An involved in homodimerization region spans residues 2 to 228 (TAVHAGNINF…PILYTASQAC (227 aa)). Lys-57 participates in a covalent cross-link: Glycyl lysine isopeptide (Lys-Gly) (interchain with G-Cter in SUMO2). Positions 97–148 (VRKQGDLMKSAAGEFADDPCSSVKRGNMVRAARALLSAVTRLLILADMADVY) are interaction with JUP and CTNNB1. Ser-264, Ser-295, and Ser-297 each carry phosphoserine. Residues 325 to 394 (TRDDRRERIV…AVMDHVSDSF (70 aa)) are interaction with alpha-actinin. Position 634 is a phosphothreonine (Thr-634). Residue Ser-641 is modified to Phosphoserine. Thr-645 is subject to Phosphothreonine. Ser-652 and Ser-655 each carry phosphoserine. Position 658 is a phosphothreonine (Thr-658). Lys-797 participates in a covalent cross-link: Glycyl lysine isopeptide (Lys-Gly) (interchain with G-Cter in SUMO2). Residue Ser-851 is modified to Phosphoserine. Residues 864-880 (PEKKPLVKREKQDETQT) show a composition bias toward basic and acidic residues. The tract at residues 864 to 894 (PEKKPLVKREKQDETQTKIKRASQKKHVNPV) is disordered. Over residues 881-891 (KIKRASQKKHV) the composition is skewed to basic residues.

This sequence belongs to the vinculin/alpha-catenin family. As to quaternary structure, monomer and homodimer; the monomer preferentially binds to CTNNB1 and the homodimer to actin. Component of an cadherin:catenin adhesion complex composed of at least of CDH26, beta-catenin/CTNNB1, alpha-catenin/CTNNA1 and p120 catenin/CTNND1. Possible component of an E-cadherin/ catenin adhesion complex together with E-cadherin/CDH1 and beta-catenin/CTNNB1 or gamma-catenin/JUP; the complex is located to adherens junctions. The stable association of CTNNA1 is controversial as CTNNA1 was shown not to bind to F-actin when assembled in the complex. Alternatively, the CTNNA1-containing complex may be linked to F-actin by other proteins such as LIMA1. Binds AFDN and F-actin. Interacts with LIMA1. Interacts with ARHGAP21. Interacts with AJUBA. Interacts with vinculin/VCL. Interacts with TJP2/ZO2 (via N-terminus). Interacts with TJP1/ZO1 (via N-terminus). Post-translationally, sumoylated. Phosphorylation seems to contribute to the strength of cell-cell adhesion rather than to the basic capacity for cell-cell adhesion. As to expression, expressed in cerebellum, heart, liver, small intestine, kidney and placenta (at protein level).

Its subcellular location is the cytoplasm. It is found in the cytoskeleton. The protein resides in the cell junction. The protein localises to the adherens junction. It localises to the cell membrane. Its subcellular location is the nucleus. Associates with the cytoplasmic domain of a variety of cadherins. The association of catenins to cadherins produces a complex which is linked to the actin filament network, and which seems to be of primary importance for cadherins cell-adhesion properties. Can associate with both E- and N-cadherins. Originally believed to be a stable component of E-cadherin/catenin adhesion complexes and to mediate the linkage of cadherins to the actin cytoskeleton at adherens junctions. In contrast, cortical actin was found to be much more dynamic than E-cadherin/catenin complexes and CTNNA1 was shown not to bind to F-actin when assembled in the complex suggesting a different linkage between actin and adherens junctions components. The homodimeric form may regulate actin filament assembly and inhibit actin branching by competing with the Arp2/3 complex for binding to actin filaments. Involved in the regulation of WWTR1/TAZ, YAP1 and TGFB1-dependent SMAD2 and SMAD3 nuclear accumulation. May play a crucial role in cell differentiation. In Mus musculus (Mouse), this protein is Catenin alpha-1.